A 125-amino-acid polypeptide reads, in one-letter code: Large ribosomal subunit protein bL12 (125 aa).

It belongs to the bacterial ribosomal protein bL12 family. In terms of assembly, homodimer. Part of the ribosomal stalk of the 50S ribosomal subunit. Forms a multimeric L10(L12)X complex, where L10 forms an elongated spine to which 2 to 4 L12 dimers bind in a sequential fashion. Binds GTP-bound translation factors.

Functionally, forms part of the ribosomal stalk which helps the ribosome interact with GTP-bound translation factors. Is thus essential for accurate translation. This chain is Large ribosomal subunit protein bL12, found in Rickettsia canadensis (strain McKiel).